The primary structure comprises 254 residues: Alcohol dehydrogenase 2 (254 aa).

An NAD(+)-binding site is contributed by 10–33 (FVAGLGGIGFDTSREIVKSGPKNL). A substrate-binding site is contributed by Ser138. Tyr151 functions as the Proton acceptor in the catalytic mechanism.

It belongs to the short-chain dehydrogenases/reductases (SDR) family. Homodimer.

The enzyme catalyses a primary alcohol + NAD(+) = an aldehyde + NADH + H(+). It catalyses the reaction a secondary alcohol + NAD(+) = a ketone + NADH + H(+). This is Alcohol dehydrogenase 2 (Adh2) from Drosophila wheeleri (Fruit fly).